A 170-amino-acid polypeptide reads, in one-letter code: Photosystem II extrinsic protein V (170 aa).

Positions 1–33 (MVSVFSSLRQSFKGLLVLVPVLIGLAFISPAEA) are cleaved as a signal peptide. Residues cysteine 70, cysteine 73, histidine 74, and methionine 137 each coordinate heme c.

This sequence belongs to the cytochrome c family. PsbV subfamily. PSII is composed of 1 copy each of membrane proteins PsbA, PsbB, PsbC, PsbD, PsbE, PsbF, PsbH, PsbI, PsbJ, PsbK, PsbL, PsbM, PsbT, PsbX, PsbY, PsbZ, Psb30/Ycf12, peripheral proteins PsbO, CyanoQ (PsbQ), PsbU, PsbV and a large number of cofactors. It forms dimeric complexes. The cofactor is heme c.

Its subcellular location is the cellular thylakoid membrane. In terms of biological role, one of the extrinsic, lumenal subunits of photosystem II (PSII). PSII is a light-driven water plastoquinone oxidoreductase, using light energy to abstract electrons from H(2)O, generating a proton gradient subsequently used for ATP formation. The extrinsic proteins stabilize the structure of photosystem II oxygen-evolving complex (OEC), the ion environment of oxygen evolution and protect the OEC against heat-induced inactivation. Low-potential cytochrome c that plays a role in the OEC of PSII. In Synechococcus sp. (strain CC9902), this protein is Photosystem II extrinsic protein V.